Here is a 142-residue protein sequence, read N- to C-terminus: Large-conductance mechanosensitive channel (142 aa).

The next 2 membrane-spanning stretches (helical) occupy residues 10 to 30 (FAIKGNVIDLAVGVIIGAAFS) and 86 to 106 (GNFITVAVNFAILAFIIFLMV).

It belongs to the MscL family. Homopentamer.

The protein resides in the cell inner membrane. Functionally, channel that opens in response to stretch forces in the membrane lipid bilayer. May participate in the regulation of osmotic pressure changes within the cell. The sequence is that of Large-conductance mechanosensitive channel from Polaromonas naphthalenivorans (strain CJ2).